The primary structure comprises 277 residues: Thiazole synthase (277 aa).

Catalysis depends on Lys-118, which acts as the Schiff-base intermediate with DXP. 1-deoxy-D-xylulose 5-phosphate contacts are provided by residues Gly-179, 205-206 (AG), and 227-228 (NT).

It belongs to the ThiG family. Homotetramer. Forms heterodimers with either ThiH or ThiS.

The protein resides in the plastid. It is found in the chloroplast. The catalysed reaction is [ThiS sulfur-carrier protein]-C-terminal-Gly-aminoethanethioate + 2-iminoacetate + 1-deoxy-D-xylulose 5-phosphate = [ThiS sulfur-carrier protein]-C-terminal Gly-Gly + 2-[(2R,5Z)-2-carboxy-4-methylthiazol-5(2H)-ylidene]ethyl phosphate + 2 H2O + H(+). The protein operates within cofactor biosynthesis; thiamine diphosphate biosynthesis. Functionally, catalyzes the rearrangement of 1-deoxy-D-xylulose 5-phosphate (DXP) to produce the thiazole phosphate moiety of thiamine. Sulfur is provided by the thiocarboxylate moiety of the carrier protein ThiS. In vitro, sulfur can be provided by H(2)S. This is Thiazole synthase from Emiliania huxleyi (Coccolithophore).